We begin with the raw amino-acid sequence, 203 residues long: GTP cyclohydrolase-2 (203 aa).

GTP is bound at residue 49-53; the sequence is RIHSE. Zn(2+)-binding residues include Cys54, Cys65, and Cys67. Residues Gln70, 92–94, and Thr114 contribute to the GTP site; that span reads EGR. The active-site Proton acceptor is Asp126. Arg128 acts as the Nucleophile in catalysis. Residues Thr149 and Lys154 each coordinate GTP.

The protein belongs to the GTP cyclohydrolase II family. It depends on Zn(2+) as a cofactor.

It carries out the reaction GTP + 4 H2O = 2,5-diamino-6-hydroxy-4-(5-phosphoribosylamino)-pyrimidine + formate + 2 phosphate + 3 H(+). The protein operates within cofactor biosynthesis; riboflavin biosynthesis; 5-amino-6-(D-ribitylamino)uracil from GTP: step 1/4. Functionally, catalyzes the conversion of GTP to 2,5-diamino-6-ribosylamino-4(3H)-pyrimidinone 5'-phosphate (DARP), formate and pyrophosphate. The protein is GTP cyclohydrolase-2 of Shewanella oneidensis (strain ATCC 700550 / JCM 31522 / CIP 106686 / LMG 19005 / NCIMB 14063 / MR-1).